The sequence spans 241 residues: Enolase-phosphatase E1 (241 aa).

Mg(2+) is bound by residues D9 and E11. Substrate is bound by residues 133–134 (SS) and K172. D198 is a Mg(2+) binding site.

The protein belongs to the HAD-like hydrolase superfamily. MasA/MtnC family. As to quaternary structure, monomer. Mg(2+) is required as a cofactor.

It is found in the cytoplasm. The protein localises to the nucleus. It catalyses the reaction 5-methylsulfanyl-2,3-dioxopentyl phosphate + H2O = 1,2-dihydroxy-5-(methylsulfanyl)pent-1-en-3-one + phosphate. The protein operates within amino-acid biosynthesis; L-methionine biosynthesis via salvage pathway; L-methionine from S-methyl-5-thio-alpha-D-ribose 1-phosphate: step 3/6. Its pathway is amino-acid biosynthesis; L-methionine biosynthesis via salvage pathway; L-methionine from S-methyl-5-thio-alpha-D-ribose 1-phosphate: step 4/6. Functionally, bifunctional enzyme that catalyzes the enolization of 2,3-diketo-5-methylthiopentyl-1-phosphate (DK-MTP-1-P) into the intermediate 2-hydroxy-3-keto-5-methylthiopentenyl-1-phosphate (HK-MTPenyl-1-P), which is then dephosphorylated to form the acireductone 1,2-dihydroxy-3-keto-5-methylthiopentene (DHK-MTPene). This is Enolase-phosphatase E1 from Scheffersomyces stipitis (strain ATCC 58785 / CBS 6054 / NBRC 10063 / NRRL Y-11545) (Yeast).